The sequence spans 72 residues: Defensin 3 (72 aa).

Residues 1 to 25 form the signal peptide; it reads MEKKMAGFCIFFLVLFLAQEYGVEG. 3 disulfides stabilise this stretch: C28–C72, C39–C60, and C45–C66.

This sequence belongs to the DEFL family. May form dimers. Post-translationally, not glycosylated. Has 4 disulfide bonds.

Probably has antifungal activity. The chain is Defensin 3 from Arachis hypogaea (Peanut).